The primary structure comprises 146 residues: uncharacterized protein (146 aa).

Positions 34 to 135 (EDKIVNDVMT…PLLEKAHALF (102 aa)) constitute a Glutaredoxin domain. Residue cysteine 54 coordinates [2Fe-2S] cluster.

The protein belongs to the glutaredoxin family. Monothiol subfamily.

This is an uncharacterized protein from Caenorhabditis elegans.